Consider the following 183-residue polypeptide: ATP-dependent protease subunit HslV (183 aa).

The active site involves threonine 13. The Na(+) site is built by glycine 168, cysteine 171, and threonine 174.

Belongs to the peptidase T1B family. HslV subfamily. In terms of assembly, a double ring-shaped homohexamer of HslV is capped on each side by a ring-shaped HslU homohexamer. The assembly of the HslU/HslV complex is dependent on binding of ATP.

It is found in the cytoplasm. The enzyme catalyses ATP-dependent cleavage of peptide bonds with broad specificity.. Allosterically activated by HslU binding. Protease subunit of a proteasome-like degradation complex believed to be a general protein degrading machinery. The sequence is that of ATP-dependent protease subunit HslV from Xanthomonas oryzae pv. oryzae (strain MAFF 311018).